Reading from the N-terminus, the 305-residue chain is MKIAIVGGPTAVGKTDIMIEVCEEIGAEIISMDSRQIYRYMDIGTAKPTPEQRKRVLHHMIDIIDPDEYYNAFMYRKDSLRAMEDVLRRGKIPVYVGGTGLYADALVRGIFEGVPADENIRKELRELERREPGILRKMLEELDPEAATRIHPNDLKRTIRALEVYMKTGRRISELQKEAKGDDRFFIIVLTRERYELYERINKRVDKMIEMGLVDEVKRLLGMGYSKDLNSMKTIGYKEVIDYLEGKYDFDKMVHLIKRNTRHFARRQIIWFKRYKEAVWYNLTFEDVGEVKEKLKKLIVENFSV.

8–15 (GPTAVGKT) is an ATP binding site. 10 to 15 (TAVGKT) is a substrate binding site. Residues 33–36 (DSRQ) form an interaction with substrate tRNA region.

Belongs to the IPP transferase family. Monomer. It depends on Mg(2+) as a cofactor.

It catalyses the reaction adenosine(37) in tRNA + dimethylallyl diphosphate = N(6)-dimethylallyladenosine(37) in tRNA + diphosphate. Its function is as follows. Catalyzes the transfer of a dimethylallyl group onto the adenine at position 37 in tRNAs that read codons beginning with uridine, leading to the formation of N6-(dimethylallyl)adenosine (i(6)A). The protein is tRNA dimethylallyltransferase of Thermotoga maritima (strain ATCC 43589 / DSM 3109 / JCM 10099 / NBRC 100826 / MSB8).